Here is a 230-residue protein sequence, read N- to C-terminus: Phosphoglycerate mutase-like protein 4 (230 aa).

H21 serves as the catalytic Tele-phosphohistidine intermediate. E96 functions as the Proton donor/acceptor in the catalytic mechanism.

This sequence belongs to the phosphoglycerate mutase family.

May play a role in carbohydrates metabolism. This chain is Phosphoglycerate mutase-like protein 4, found in Arabidopsis thaliana (Mouse-ear cress).